A 223-amino-acid polypeptide reads, in one-letter code: RNA-free ribonuclease P (223 aa).

The protein belongs to the HARP family.

It catalyses the reaction Endonucleolytic cleavage of RNA, removing 5'-extranucleotides from tRNA precursor.. In terms of biological role, RNA-free RNase P that catalyzes the removal of the 5'-leader sequence from pre-tRNA to produce the mature 5'-terminus. This Methanococcus maripaludis (strain C7 / ATCC BAA-1331) protein is RNA-free ribonuclease P.